The following is a 217-amino-acid chain: Small ribosomal subunit protein uS3 (217 aa).

Residues 40–110 (IRELVNKSFT…EVYINIHEVR (71 aa)) enclose the KH type-2 domain.

Belongs to the universal ribosomal protein uS3 family. In terms of assembly, part of the 30S ribosomal subunit. Forms a tight complex with proteins S10 and S14.

Its function is as follows. Binds the lower part of the 30S subunit head. Binds mRNA in the 70S ribosome, positioning it for translation. This is Small ribosomal subunit protein uS3 from Rickettsia bellii (strain OSU 85-389).